The following is a 96-amino-acid chain: Transcription and mRNA export factor SUS1 (96 aa).

Belongs to the ENY2 family. As to quaternary structure, component of the nuclear pore complex (NPC)-associated TREX-2 complex (transcription and export complex 2), composed of at least SUS1, SAC3, THP1, SEM1, and CDC31. TREX-2 contains 2 SUS1 chains. The TREX-2 complex interacts with the nucleoporin NUP1. Component of the 1.8 MDa SAGA transcription coactivator-HAT complex. SAGA is built of 5 distinct domains with specialized functions. Within the SAGA complex, SUS1, SGF11, SGF73 and UBP8 form an additional subcomplex of SAGA called the DUB module (deubiquitination module). Interacts directly with THP1, SAC3, SGF11, and with the RNA polymerase II.

It localises to the nucleus. Its subcellular location is the nucleoplasm. It is found in the cytoplasm. The protein localises to the P-body. Involved in mRNA export coupled transcription activation by association with both the TREX-2 and the SAGA complexes. At the promoters, SAGA is required for recruitment of the basal transcription machinery. It influences RNA polymerase II transcriptional activity through different activities such as TBP interaction and promoter selectivity, interaction with transcription activators, and chromatin modification through histone acetylation and deubiquitination. Within the SAGA complex, participates in a subcomplex required for deubiquitination of H2B and for the maintenance of steady-state H3 methylation levels. The TREX-2 complex functions in docking export-competent ribonucleoprotein particles (mRNPs) to the nuclear entrance of the nuclear pore complex (nuclear basket). TREX-2 participates in mRNA export and accurate chromatin positioning in the nucleus by tethering genes to the nuclear periphery. May also be involved in cytoplasmic mRNA decay by interaction with components of P-bodies. The sequence is that of Transcription and mRNA export factor SUS1 from Kluyveromyces lactis (strain ATCC 8585 / CBS 2359 / DSM 70799 / NBRC 1267 / NRRL Y-1140 / WM37) (Yeast).